The chain runs to 397 residues: DnaJ homolog subfamily A member 1 (397 aa).

The region spanning 6-68 is the J domain; it reads TYYDVLGVKP…KKRELYDKGG (63 aa). Position 66 is an N6-acetyllysine (Lys66). Phosphoserine is present on Ser83. The segment at 121–205 adopts a CR-type zinc-finger fold; the sequence is GATRKLALQK…CNGRKIVREK (85 aa). 8 residues coordinate Zn(2+): Cys134, Cys137, Cys150, Cys153, Cys177, Cys180, Cys193, and Cys196. 4 CXXCXGXG motif repeats span residues 134-141, 150-157, 177-184, and 193-200; these read CDKCEGRG, CPNCRGTG, CMECQGHG, and CKSCNGRK. Phosphoserine is present on Ser335. Residues 352 to 397 form a disordered region; it reads VEETDEMDQVELVDFDPNQERRRHYNGEAYEDDEHHPRGGVQCQTS. The segment covering 353 to 365 has biased composition (acidic residues); it reads EETDEMDQVELVD. Position 381 is a phosphotyrosine (Tyr381). At Cys394 the chain carries Cysteine methyl ester. Residue Cys394 is the site of S-farnesyl cysteine attachment. A propeptide spans 395–397 (removed in mature form); sequence QTS.

Identified in a complex with HSPA1B and BAX. Interacts with RNF207.

It is found in the membrane. The protein resides in the cytoplasm. Its subcellular location is the microsome. The protein localises to the mitochondrion. It localises to the nucleus. It is found in the perinuclear region. Its function is as follows. Co-chaperone for HSPA8/Hsc70. Plays a role in protein transport into mitochondria via its role as co-chaperone. Functions as co-chaperone for HSPA1B and negatively regulates the translocation of BAX from the cytosol to mitochondria in response to cellular stress, thereby protecting cells against apoptosis. Stimulates ATP hydrolysis, but not the folding of unfolded proteins mediated by HSPA1A (in vitro). Promotes apoptosis in response to cellular stress mediated by exposure to anisomycin or UV. The polypeptide is DnaJ homolog subfamily A member 1 (DNAJA1) (Bos taurus (Bovine)).